Here is a 381-residue protein sequence, read N- to C-terminus: Chymosin (381 aa).

The N-terminal stretch at 1–16 is a signal peptide; that stretch reads MRCLVVLLAVFALSQG. Residues 17–58 constitute a propeptide, activation peptide; sequence AEITRIPLYKGKPLRKALKERGLLEDFLQKQQYGVSSEYSGF. The region spanning 74–378 is the Peptidase A1 domain; the sequence is YFGKIYLGTP…DRANNLVGLA (305 aa). Residue D92 is part of the active site. Cystine bridges form between C105-C110 and C265-C269. D274 is an active-site residue. An intrachain disulfide couples C308 to C341.

It belongs to the peptidase A1 family. In terms of assembly, monomer.

It carries out the reaction Broad specificity similar to that of pepsin A. Clots milk by cleavage of a single 104-Ser-Phe-|-Met-Ala-107 bond in kappa-chain of casein.. In terms of biological role, chymosin is synthesized in the mucosa of the stomach. The enzyme hydrolyzes casein to paracasein. The polypeptide is Chymosin (CYM) (Ovis aries (Sheep)).